The following is a 93-amino-acid chain: Large ribosomal subunit protein uL23cz/uL23cy (93 aa).

This sequence belongs to the universal ribosomal protein uL23 family. Part of the 50S ribosomal subunit.

The protein resides in the plastid. It localises to the chloroplast. Binds to 23S rRNA. This is Large ribosomal subunit protein uL23cz/uL23cy (rpl23-A) from Oryza nivara (Indian wild rice).